A 459-amino-acid chain; its full sequence is Ribulose bisphosphate carboxylase large chain (459 aa).

An N6,N6,N6-trimethyllysine modification is found at lysine 4. Asparagine 113 and threonine 163 together coordinate substrate. The Proton acceptor role is filled by lysine 165. Lysine 167 is a binding site for substrate. Residues lysine 191, aspartate 193, and glutamate 194 each coordinate Mg(2+). Residue lysine 191 is modified to N6-carboxylysine. The Proton acceptor role is filled by histidine 284. Positions 285, 317, and 369 each coordinate substrate.

The protein belongs to the RuBisCO large chain family. Type I subfamily. Heterohexadecamer of 8 large chains and 8 small chains; disulfide-linked. The disulfide link is formed within the large subunit homodimers. Mg(2+) serves as cofactor. The disulfide bond which can form in the large chain dimeric partners within the hexadecamer appears to be associated with oxidative stress and protein turnover.

The protein localises to the plastid. It localises to the chloroplast. It catalyses the reaction 2 (2R)-3-phosphoglycerate + 2 H(+) = D-ribulose 1,5-bisphosphate + CO2 + H2O. The enzyme catalyses D-ribulose 1,5-bisphosphate + O2 = 2-phosphoglycolate + (2R)-3-phosphoglycerate + 2 H(+). Functionally, ruBisCO catalyzes two reactions: the carboxylation of D-ribulose 1,5-bisphosphate, the primary event in carbon dioxide fixation, as well as the oxidative fragmentation of the pentose substrate in the photorespiration process. Both reactions occur simultaneously and in competition at the same active site. The protein is Ribulose bisphosphate carboxylase large chain of Parnassia fimbriata (Fringed grass-of-Parnassus).